We begin with the raw amino-acid sequence, 447 residues long: Tol-Pal system protein TolB (447 aa).

The N-terminal stretch at Met1–Ala29 is a signal peptide.

Belongs to the TolB family. In terms of assembly, the Tol-Pal system is composed of five core proteins: the inner membrane proteins TolA, TolQ and TolR, the periplasmic protein TolB and the outer membrane protein Pal. They form a network linking the inner and outer membranes and the peptidoglycan layer.

The protein localises to the periplasm. Its function is as follows. Part of the Tol-Pal system, which plays a role in outer membrane invagination during cell division and is important for maintaining outer membrane integrity. In Paramagnetospirillum magneticum (strain ATCC 700264 / AMB-1) (Magnetospirillum magneticum), this protein is Tol-Pal system protein TolB.